Here is a 532-residue protein sequence, read N- to C-terminus: MELKAMYLYAAVLAVLLCSSVNFIQSPTDVLGPVALLEPTPSSARDFGAVVSDAPFAVMRPESPDDIALLLGALSSTAPSPRATVAAVGAGHSLHGQAQARDGIVVETRALPRDVHVVSARAHGGDDDATVRAYADVGAGALWVEVLEECLKLGLAPPSWTDYLYLTVGGTLSNGGISGQTFKHGPQISNVLQLEVVTGKGEVVTCSPTEIPELFFAVLGGLGQFGIITRARIPLQLAPPKVRWVRAFYDSFETFTGDQELLVSMPEQVDYVEGFMVLNEQSLHSSSVAFPAQLNFSPDFGSKGRKKVYYCIEFAVHDFQQDSSRADHVVKLVSAKLSYLRPHVYSVEVSYFDFLNRVRMEEESLRSRGLWDVPHPWLNVFVPKHGITQFKGLLMDTVSADDFEGPILVYPLLTDKWDGNTSAVVPAAPDGVMYIFGVLRSTDPARCGRACVDSIMARHRRVADEACRDGGGGGRGIGAKQYLARQPSPARWRDHFGAGWGRFAARKARFDPLHVLGPGQGIFPRTDSAGSM.

The N-terminal stretch at 1-26 (MELKAMYLYAAVLAVLLCSSVNFIQS) is a signal peptide. The 188-residue stretch at 51–238 (VSDAPFAVMR…TRARIPLQLA (188 aa)) folds into the FAD-binding PCMH-type domain. FAD-binding residues include Ala-87, Gly-89, and Gly-91. Position 92 is a pros-8alpha-FAD histidine (His-92). Positions 93, 97, 162, 167, 173, 177, and 228 each coordinate FAD. N-linked (GlcNAc...) asparagine glycosylation is present at Asn-420. The FAD site is built by Tyr-482 and Gln-520.

Belongs to the oxygen-dependent FAD-linked oxidoreductase family. In terms of assembly, monomer. The cofactor is FAD.

The protein localises to the secreted. It localises to the extracellular space. The catalysed reaction is N(6)-dimethylallyladenine + A + H2O = 3-methyl-2-butenal + adenine + AH2. Its function is as follows. Catalyzes the oxidation of cytokinins, a family of N(6)-substituted adenine derivatives that are plant hormones, where the substituent is an isopentenyl group. This chain is Cytokinin dehydrogenase 8 (CKX8), found in Oryza sativa subsp. indica (Rice).